Consider the following 257-residue polypeptide: UPF0246 protein Daro_2893 (257 aa).

The protein belongs to the UPF0246 family.

The protein is UPF0246 protein Daro_2893 of Dechloromonas aromatica (strain RCB).